Here is a 439-residue protein sequence, read N- to C-terminus: Sex-determination protein fem-3 (439 aa).

A disordered region spans residues 21–45 (RRLKRKANDDDDDDETVRERVDDAE).

As to quaternary structure, component of a complex containing fem-1, fem-2 and fem-3. Interacts with fem-1 and fem-2 (via N-terminus). Part of a E3 ubiquitin-protein ligase complex, at least composed of cul-2, elc-1, tra-1, fem-1, fem-2 and fem-3; mediates the ubiquitination and subsequent proteasomal degradation of tra-1. Interacts with tra-1. Interacts with sel-10. Interacts with tra-2.

In terms of biological role, required for male development. In XO (male) animals, fem-3 directs male differentiation in all tissues. In XX (hermaphrodite) animals, it specifies the first 80 or so germ cells to be sperm. Negatively regulates male development when bound to tra-2. Together with fem-2 associates with the CBC(fem-1) E3 ubiquitin-protein ligase complex which mediates the ubiquitination and subsequent proteasomal degradation of tra-1. This is Sex-determination protein fem-3 from Caenorhabditis remanei (Caenorhabditis vulgaris).